A 95-amino-acid polypeptide reads, in one-letter code: uncharacterized protein (95 aa).

Residues 1-21 (MKKITLFFTALLCLFSTSVLA) form the signal peptide.

This is an uncharacterized protein from Haemophilus influenzae (strain ATCC 51907 / DSM 11121 / KW20 / Rd).